The chain runs to 545 residues: Glucose-6-phosphate isomerase (545 aa).

Glu353 functions as the Proton donor in the catalytic mechanism. Catalysis depends on residues His384 and Lys510.

Belongs to the GPI family.

The protein resides in the cytoplasm. It catalyses the reaction alpha-D-glucose 6-phosphate = beta-D-fructose 6-phosphate. It functions in the pathway carbohydrate biosynthesis; gluconeogenesis. The protein operates within carbohydrate degradation; glycolysis; D-glyceraldehyde 3-phosphate and glycerone phosphate from D-glucose: step 2/4. Catalyzes the reversible isomerization of glucose-6-phosphate to fructose-6-phosphate. This chain is Glucose-6-phosphate isomerase, found in Aromatoleum aromaticum (strain DSM 19018 / LMG 30748 / EbN1) (Azoarcus sp. (strain EbN1)).